A 353-amino-acid polypeptide reads, in one-letter code: sn-glycerol-3-phosphate import ATP-binding protein UgpC 3 (353 aa).

One can recognise an ABC transporter domain in the interval 4 to 235; sequence IALKDVRKVY…PATTFVATFI (232 aa). Position 37 to 44 (37 to 44) interacts with ATP; that stretch reads GPSGCGKS.

The protein belongs to the ABC transporter superfamily. sn-glycerol-3-phosphate importer (TC 3.A.1.1.3) family. In terms of assembly, the complex is composed of two ATP-binding proteins (UgpC), two transmembrane proteins (UgpA and UgpE) and a solute-binding protein (UgpB).

It localises to the cell inner membrane. It carries out the reaction sn-glycerol 3-phosphate(out) + ATP + H2O = sn-glycerol 3-phosphate(in) + ADP + phosphate + H(+). Functionally, part of the ABC transporter complex UgpBAEC involved in sn-glycerol-3-phosphate (G3P) import. Responsible for energy coupling to the transport system. The chain is sn-glycerol-3-phosphate import ATP-binding protein UgpC 3 from Agrobacterium fabrum (strain C58 / ATCC 33970) (Agrobacterium tumefaciens (strain C58)).